Consider the following 374-residue polypeptide: Queuine tRNA-ribosyltransferase (374 aa).

The active-site Proton acceptor is D89. Residues 89-93, D143, Q187, and G214 each bind substrate; that span reads DSGGF. The RNA binding stretch occupies residues 245 to 251; sequence GVGKPED. The active-site Nucleophile is the D264. The tract at residues 269 to 273 is RNA binding; important for wobble base 34 recognition; it reads TRNAR. Residues C302, C304, C307, and H333 each contribute to the Zn(2+) site.

This sequence belongs to the queuine tRNA-ribosyltransferase family. As to quaternary structure, homodimer. Within each dimer, one monomer is responsible for RNA recognition and catalysis, while the other monomer binds to the replacement base PreQ1. It depends on Zn(2+) as a cofactor.

It carries out the reaction 7-aminomethyl-7-carbaguanine + guanosine(34) in tRNA = 7-aminomethyl-7-carbaguanosine(34) in tRNA + guanine. It functions in the pathway tRNA modification; tRNA-queuosine biosynthesis. Catalyzes the base-exchange of a guanine (G) residue with the queuine precursor 7-aminomethyl-7-deazaguanine (PreQ1) at position 34 (anticodon wobble position) in tRNAs with GU(N) anticodons (tRNA-Asp, -Asn, -His and -Tyr). Catalysis occurs through a double-displacement mechanism. The nucleophile active site attacks the C1' of nucleotide 34 to detach the guanine base from the RNA, forming a covalent enzyme-RNA intermediate. The proton acceptor active site deprotonates the incoming PreQ1, allowing a nucleophilic attack on the C1' of the ribose to form the product. After dissociation, two additional enzymatic reactions on the tRNA convert PreQ1 to queuine (Q), resulting in the hypermodified nucleoside queuosine (7-(((4,5-cis-dihydroxy-2-cyclopenten-1-yl)amino)methyl)-7-deazaguanosine). The chain is Queuine tRNA-ribosyltransferase from Serratia proteamaculans (strain 568).